A 241-amino-acid polypeptide reads, in one-letter code: 1-(5-phosphoribosyl)-5-[(5-phosphoribosylamino)methylideneamino] imidazole-4-carboxamide isomerase (241 aa).

Asp8 functions as the Proton acceptor in the catalytic mechanism. Asp129 functions as the Proton donor in the catalytic mechanism.

Belongs to the HisA/HisF family.

It is found in the cytoplasm. The enzyme catalyses 1-(5-phospho-beta-D-ribosyl)-5-[(5-phospho-beta-D-ribosylamino)methylideneamino]imidazole-4-carboxamide = 5-[(5-phospho-1-deoxy-D-ribulos-1-ylimino)methylamino]-1-(5-phospho-beta-D-ribosyl)imidazole-4-carboxamide. The protein operates within amino-acid biosynthesis; L-histidine biosynthesis; L-histidine from 5-phospho-alpha-D-ribose 1-diphosphate: step 4/9. This Chloroflexus aurantiacus (strain ATCC 29364 / DSM 637 / Y-400-fl) protein is 1-(5-phosphoribosyl)-5-[(5-phosphoribosylamino)methylideneamino] imidazole-4-carboxamide isomerase.